The sequence spans 518 residues: Lysine--tRNA ligase (518 aa).

Mg(2+)-binding residues include E407 and E414.

It belongs to the class-II aminoacyl-tRNA synthetase family. In terms of assembly, homodimer. The cofactor is Mg(2+).

It is found in the cytoplasm. It carries out the reaction tRNA(Lys) + L-lysine + ATP = L-lysyl-tRNA(Lys) + AMP + diphosphate. In Helicobacter hepaticus (strain ATCC 51449 / 3B1), this protein is Lysine--tRNA ligase.